Consider the following 185-residue polypeptide: Elongation factor P (185 aa).

The protein belongs to the elongation factor P family.

The protein localises to the cytoplasm. The protein operates within protein biosynthesis; polypeptide chain elongation. In terms of biological role, involved in peptide bond synthesis. Stimulates efficient translation and peptide-bond synthesis on native or reconstituted 70S ribosomes in vitro. Probably functions indirectly by altering the affinity of the ribosome for aminoacyl-tRNA, thus increasing their reactivity as acceptors for peptidyl transferase. In Nitratidesulfovibrio vulgaris (strain DP4) (Desulfovibrio vulgaris), this protein is Elongation factor P.